A 535-amino-acid polypeptide reads, in one-letter code: CTP synthase (535 aa).

The segment at 1–268 (MPNKYIVVTG…VSKILSRLKL (268 aa)) is amidoligase domain. Serine 14 is a CTP binding site. Position 14 (serine 14) interacts with UTP. 15–20 (SVGKGT) contacts ATP. Tyrosine 55 is a binding site for L-glutamine. Position 72 (aspartate 72) interacts with ATP. 2 residues coordinate Mg(2+): aspartate 72 and glutamate 142. Residues 149–151 (DIE), 189–194 (KTKPLQ), and lysine 225 each bind CTP. UTP is bound by residues 189 to 194 (KTKPLQ) and lysine 225. Position 243 (valine 243) interacts with ATP. A Glutamine amidotransferase type-1 domain is found at 302-535 (YTKLKDSYIS…LGFIRAVASL (234 aa)). Glycine 359 lines the L-glutamine pocket. The Nucleophile; for glutamine hydrolysis role is filled by cysteine 386. Residues 387–390 (FGFQ), glutamate 410, and arginine 467 contribute to the L-glutamine site. Residues histidine 511 and glutamate 513 contribute to the active site.

This sequence belongs to the CTP synthase family. As to quaternary structure, homotetramer in the presence of ATP and UTP. The enzyme dissociates into homodimers in the absence of substrate nucleotides.

The catalysed reaction is UTP + L-glutamine + ATP + H2O = CTP + L-glutamate + ADP + phosphate + 2 H(+). The enzyme catalyses L-glutamine + H2O = L-glutamate + NH4(+). It carries out the reaction UTP + NH4(+) + ATP = CTP + ADP + phosphate + 2 H(+). It functions in the pathway pyrimidine metabolism; CTP biosynthesis via de novo pathway; CTP from UDP: step 2/2. With respect to regulation, allosterically activated by GTP, when glutamine is the substrate; GTP has no effect on the reaction when ammonia is the substrate. The allosteric effector GTP functions by stabilizing the protein conformation that binds the tetrahedral intermediate(s) formed during glutamine hydrolysis. Inhibited by the product CTP, via allosteric rather than competitive inhibition. Its function is as follows. Catalyzes the ATP-dependent amination of UTP to CTP with either L-glutamine or ammonia as the source of nitrogen. Regulates intracellular CTP levels through interactions with the four ribonucleotide triphosphates. The protein is CTP synthase of Saccharolobus solfataricus (strain ATCC 35092 / DSM 1617 / JCM 11322 / P2) (Sulfolobus solfataricus).